A 320-amino-acid polypeptide reads, in one-letter code: MKMINKLIVPVTASALLLGACGASATDSKENTLISSKAGDVTVADTMKKIGKDQIANASFTEMLNKILADKYKNKVNDKKIDEQIEKMQKQYGGKDKFEKALQQQGLTADKYKENLRTAAYHKELLSDKIKISDSEIKEDSKKASHILIKVKSKKSDKEGLDDKEAKQKAEEIQKEVSKDPSKFGEIAKKESMDTGSAKKDGELGYVLKGQTDKDFEKALFKLKDGEVSDVVKSSFGYHIIKADKPTDFNSEKQSLKEKLVDQKVQKNPKLLTDAYKDLLKEYDVDFKDRDIKSVVEDKILNPEKLKQGGAQGGQSGMSQ.

An N-terminal signal peptide occupies residues 1 to 20; the sequence is MKMINKLIVPVTASALLLGA. Cys21 carries the N-palmitoyl cysteine lipid modification. The S-diacylglycerol cysteine moiety is linked to residue Cys21. In terms of domain architecture, PpiC spans 139 to 245; the sequence is EDSKKASHIL…FGYHIIKADK (107 aa). The disordered stretch occupies residues 159-198; sequence EGLDDKEAKQKAEEIQKEVSKDPSKFGEIAKKESMDTGSA.

It belongs to the PrsA family.

It is found in the cell membrane. The enzyme catalyses [protein]-peptidylproline (omega=180) = [protein]-peptidylproline (omega=0). Its function is as follows. Plays a major role in protein secretion by helping the post-translocational extracellular folding of several secreted proteins. The sequence is that of Foldase protein PrsA from Staphylococcus aureus (strain bovine RF122 / ET3-1).